We begin with the raw amino-acid sequence, 120 residues long: Ribonuclease P protein component 2 (120 aa).

The protein belongs to the eukaryotic/archaeal RNase P protein component 2 family. Consists of a catalytic RNA component and at least 4-5 protein subunits.

It is found in the cytoplasm. The enzyme catalyses Endonucleolytic cleavage of RNA, removing 5'-extranucleotides from tRNA precursor.. Functionally, part of ribonuclease P, a protein complex that generates mature tRNA molecules by cleaving their 5'-ends. The sequence is that of Ribonuclease P protein component 2 from Thermococcus gammatolerans (strain DSM 15229 / JCM 11827 / EJ3).